The primary structure comprises 99 residues: Nucleoid-associated protein EbfC (99 aa).

The protein belongs to the YbaB/EbfC family. As to quaternary structure, homodimer.

The protein localises to the cytoplasm. It localises to the nucleoid. Functionally, binds to DNA and alters its conformation. May be involved in regulation of gene expression, nucleoid organization and DNA protection. This Borreliella burgdorferi (strain ZS7) (Borrelia burgdorferi) protein is Nucleoid-associated protein EbfC.